We begin with the raw amino-acid sequence, 563 residues long: Secreted lipase ARB07186/07185 (563 aa).

Positions 1-20 (MAKYDFVMLWILTLTAAIAA) are cleaved as a signal peptide. C83 and C101 are joined by a disulfide. Catalysis depends on S215, which acts as the Acyl-ester intermediate. A disulfide bond links C268 and C281.

It belongs to the type-B carboxylesterase/lipase family.

Its subcellular location is the secreted. It carries out the reaction a triacylglycerol + H2O = a diacylglycerol + a fatty acid + H(+). The chain is Secreted lipase ARB07186/07185 from Arthroderma benhamiae (strain ATCC MYA-4681 / CBS 112371) (Trichophyton mentagrophytes).